Consider the following 50-residue polypeptide: Protein hunchback (50 aa).

C2H2-type zinc fingers lie at residues 1-5 (HIRNH), 11-33 (FKCNKCSYSCVNKSMLNSHLKSH), and 39-50 (YRCADCAYATKY).

This sequence belongs to the hunchback C2H2-type zinc-finger protein family.

It localises to the nucleus. Gap class segmentation protein that controls development of head structures. The sequence is that of Protein hunchback (hb) from Schultesia lampyridiformis (Firefly mimic roach).